The sequence spans 96 residues: Small ribosomal subunit protein bS6c (96 aa).

Belongs to the bacterial ribosomal protein bS6 family.

Its subcellular location is the plastid. The protein localises to the chloroplast. Its function is as follows. Binds together with bS18 to 16S ribosomal RNA. The sequence is that of Small ribosomal subunit protein bS6c (rps6) from Guillardia theta (Cryptophyte).